The sequence spans 107 residues: Thiosulfate sulfurtransferase GlpE (107 aa).

The 89-residue stretch at 17–105 (RQGEAVLVDI…WLKAFPLETE (89 aa)) folds into the Rhodanese domain. Residue C65 is the Cysteine persulfide intermediate of the active site.

It belongs to the GlpE family.

Its subcellular location is the cytoplasm. It catalyses the reaction thiosulfate + hydrogen cyanide = thiocyanate + sulfite + 2 H(+). The catalysed reaction is thiosulfate + [thioredoxin]-dithiol = [thioredoxin]-disulfide + hydrogen sulfide + sulfite + 2 H(+). Its function is as follows. Transferase that catalyzes the transfer of sulfur from thiosulfate to thiophilic acceptors such as cyanide or dithiols. May function in a CysM-independent thiosulfate assimilation pathway by catalyzing the conversion of thiosulfate to sulfite, which can then be used for L-cysteine biosynthesis. This is Thiosulfate sulfurtransferase GlpE from Sodalis glossinidius (strain morsitans).